The chain runs to 402 residues: 4-hydroxy-3-methylbut-2-enyl diphosphate reductase (402 aa).

Cysteine 66 contributes to the [4Fe-4S] cluster binding site. Histidine 96 provides a ligand contact to (2E)-4-hydroxy-3-methylbut-2-enyl diphosphate. Histidine 96 contacts dimethylallyl diphosphate. Histidine 96 contributes to the isopentenyl diphosphate binding site. Cysteine 157 provides a ligand contact to [4Fe-4S] cluster. Histidine 185 provides a ligand contact to (2E)-4-hydroxy-3-methylbut-2-enyl diphosphate. Histidine 185 is a binding site for dimethylallyl diphosphate. Histidine 185 is a binding site for isopentenyl diphosphate. Residue glutamate 187 is the Proton donor of the active site. Position 250 (threonine 250) interacts with (2E)-4-hydroxy-3-methylbut-2-enyl diphosphate. Position 288 (cysteine 288) interacts with [4Fe-4S] cluster. Residues serine 317, serine 318, asparagine 319, and serine 379 each coordinate (2E)-4-hydroxy-3-methylbut-2-enyl diphosphate. Dimethylallyl diphosphate-binding residues include serine 317, serine 318, asparagine 319, and serine 379. Serine 317, serine 318, asparagine 319, and serine 379 together coordinate isopentenyl diphosphate.

This sequence belongs to the IspH family. [4Fe-4S] cluster is required as a cofactor.

It catalyses the reaction isopentenyl diphosphate + 2 oxidized [2Fe-2S]-[ferredoxin] + H2O = (2E)-4-hydroxy-3-methylbut-2-enyl diphosphate + 2 reduced [2Fe-2S]-[ferredoxin] + 2 H(+). The catalysed reaction is dimethylallyl diphosphate + 2 oxidized [2Fe-2S]-[ferredoxin] + H2O = (2E)-4-hydroxy-3-methylbut-2-enyl diphosphate + 2 reduced [2Fe-2S]-[ferredoxin] + 2 H(+). The protein operates within isoprenoid biosynthesis; dimethylallyl diphosphate biosynthesis; dimethylallyl diphosphate from (2E)-4-hydroxy-3-methylbutenyl diphosphate: step 1/1. Its pathway is isoprenoid biosynthesis; isopentenyl diphosphate biosynthesis via DXP pathway; isopentenyl diphosphate from 1-deoxy-D-xylulose 5-phosphate: step 6/6. Its function is as follows. Catalyzes the conversion of 1-hydroxy-2-methyl-2-(E)-butenyl 4-diphosphate (HMBPP) into a mixture of isopentenyl diphosphate (IPP) and dimethylallyl diphosphate (DMAPP). Acts in the terminal step of the DOXP/MEP pathway for isoprenoid precursor biosynthesis. In Crocosphaera subtropica (strain ATCC 51142 / BH68) (Cyanothece sp. (strain ATCC 51142)), this protein is 4-hydroxy-3-methylbut-2-enyl diphosphate reductase.